We begin with the raw amino-acid sequence, 84 residues long: ATP synthase subunit c (84 aa).

The next 2 membrane-spanning stretches (helical) occupy residues 9–29 (IIGASILLAFAALGTAIGFAI) and 54–74 (IVAGLLDAIAMIAVGISLLFI).

It belongs to the ATPase C chain family. F-type ATPases have 2 components, F(1) - the catalytic core - and F(0) - the membrane proton channel. F(1) has five subunits: alpha(3), beta(3), gamma(1), delta(1), epsilon(1). F(0) has three main subunits: a(1), b(2) and c(10-14). The alpha and beta chains form an alternating ring which encloses part of the gamma chain. F(1) is attached to F(0) by a central stalk formed by the gamma and epsilon chains, while a peripheral stalk is formed by the delta and b chains.

The protein resides in the cell inner membrane. Its function is as follows. F(1)F(0) ATP synthase produces ATP from ADP in the presence of a proton or sodium gradient. F-type ATPases consist of two structural domains, F(1) containing the extramembraneous catalytic core and F(0) containing the membrane proton channel, linked together by a central stalk and a peripheral stalk. During catalysis, ATP synthesis in the catalytic domain of F(1) is coupled via a rotary mechanism of the central stalk subunits to proton translocation. Key component of the F(0) channel; it plays a direct role in translocation across the membrane. A homomeric c-ring of between 10-14 subunits forms the central stalk rotor element with the F(1) delta and epsilon subunits. The sequence is that of ATP synthase subunit c from Glaesserella parasuis serovar 5 (strain SH0165) (Haemophilus parasuis).